Here is a 318-residue protein sequence, read N- to C-terminus: Taste receptor type 2 member 7 (318 aa).

The Extracellular portion of the chain corresponds to 1-9; sequence MADKVQTTL. Residues 10 to 30 traverse the membrane as a helical segment; that stretch reads LFLAVGEFSVGILGNAFIGLV. Residues 31-55 are Cytoplasmic-facing; sequence NCMDWVKKRKIASIDLILTSLAISR. The chain crosses the membrane as a helical span at residues 56 to 76; it reads ICLLCIILLDCFTLVLYPDVY. Topologically, residues 77–94 are extracellular; that stretch reads ATGKEMRIIDFFWTLTNH. A helical transmembrane segment spans residues 95 to 115; sequence LSIWFATCLSIYYFFKIGNFF. At 116–128 the chain is on the cytoplasmic side; sequence HPLFLWMKWRIDR. Residues 129-149 traverse the membrane as a helical segment; it reads VISWILLGCVVLSVFISLPAT. The Extracellular segment spans residues 150–187; sequence ENLNADFRFCVKAKRKTNLTWSCRVNKTQHASTKLFLN. N-linked (GlcNAc...) asparagine glycans are attached at residues Asn-167 and Asn-175. A helical membrane pass occupies residues 188–208; sequence LATLLPFCVCLMSFFLLILSL. Over 209–235 the chain is Cytoplasmic; it reads RRHIRRMQLSATGCRDPSTEAHVRALK. Residues 236-256 traverse the membrane as a helical segment; it reads AVISFLLLFIAYYLSFLIATS. Over 257–266 the chain is Extracellular; that stretch reads SYFMPETELA. Residues 267–287 traverse the membrane as a helical segment; it reads VIFGESIALIYPSSHSFILIL. Topologically, residues 288 to 318 are cytoplasmic; sequence GNNKLRYVSLKVIWKVMSILKGRKFQQHKQI.

Belongs to the G-protein coupled receptor T2R family.

It localises to the membrane. Gustducin-coupled receptor implicated in the perception of bitter compounds in the oral cavity and the gastrointestinal tract. Signals through PLCB2 and the calcium-regulated cation channel TRPM5. The protein is Taste receptor type 2 member 7 (TAS2R7) of Gorilla gorilla gorilla (Western lowland gorilla).